The chain runs to 97 residues: Large ribosomal subunit protein uL30m (97 aa).

Belongs to the universal ribosomal protein uL30 family. As to quaternary structure, component of the mitochondrial large ribosomal subunit (mt-LSU). Mature yeast 74S mitochondrial ribosomes consist of a small (37S) and a large (54S) subunit. The 37S small subunit contains a 15S ribosomal RNA (15S mt-rRNA) and at least 32 different proteins. The 54S large subunit contains a 21S rRNA (21S mt-rRNA) and at least 45 different proteins.

It localises to the mitochondrion. Functionally, component of the mitochondrial ribosome (mitoribosome), a dedicated translation machinery responsible for the synthesis of mitochondrial genome-encoded proteins, including at least some of the essential transmembrane subunits of the mitochondrial respiratory chain. The mitoribosomes are attached to the mitochondrial inner membrane and translation products are cotranslationally integrated into the membrane. In Schizosaccharomyces pombe (strain 972 / ATCC 24843) (Fission yeast), this protein is Large ribosomal subunit protein uL30m (mrpl33).